A 100-amino-acid polypeptide reads, in one-letter code: MELNPTEKDKLLIFTAGLVAERRKARGLKLNYPEAVAFISAALLEGARDGMTVSELMHFGTTLLKRKDVMDGVPEMIAEVQVEATFPDGSKLVTVHQPIV.

It belongs to the urease gamma subunit family. In terms of assembly, heterotrimer of UreA (gamma), UreB (beta) and UreC (alpha) subunits. Three heterotrimers associate to form the active enzyme.

The protein localises to the cytoplasm. It carries out the reaction urea + 2 H2O + H(+) = hydrogencarbonate + 2 NH4(+). It functions in the pathway nitrogen metabolism; urea degradation; CO(2) and NH(3) from urea (urease route): step 1/1. This chain is Urease subunit gamma, found in Acinetobacter baumannii (strain SDF).